A 447-amino-acid polypeptide reads, in one-letter code: Phosphoglucosamine mutase (447 aa).

Ser-102 (phosphoserine intermediate) is an active-site residue. Mg(2+) contacts are provided by Ser-102, Asp-241, Asp-243, and Asp-245. Phosphoserine is present on Ser-102.

It belongs to the phosphohexose mutase family. The cofactor is Mg(2+). Post-translationally, activated by phosphorylation.

It catalyses the reaction alpha-D-glucosamine 1-phosphate = D-glucosamine 6-phosphate. Functionally, catalyzes the conversion of glucosamine-6-phosphate to glucosamine-1-phosphate. This Pseudomonas syringae pv. syringae (strain B728a) protein is Phosphoglucosamine mutase.